A 107-amino-acid polypeptide reads, in one-letter code: uncharacterized protein (107 aa).

Disordered regions lie at residues 51-75 and 88-107; these read VQRS…TQSA and NPTP…APEP. Residues 63–75 are compositionally biased toward polar residues; that stretch reads NGNQGSAIPTQSA.

This is an uncharacterized protein from Fowl adenovirus A serotype 1 (strain CELO / Phelps) (FAdV-1).